Consider the following 77-residue polypeptide: Conotoxin S6.11 (77 aa).

The signal sequence occupies residues 1 to 19 (MEKLTILLLVAAVLMSTQA). A propeptide spanning residues 20-50 (LIQGGLDERQKAKSNFFSKRKSNAESWWEGE) is cleaved from the precursor. Disulfide bonds link Cys51/Cys65, Cys58/Cys69, and Cys64/Cys74.

This sequence belongs to the conotoxin O2 superfamily. As to expression, expressed by the venom duct.

The protein localises to the secreted. This chain is Conotoxin S6.11, found in Conus striatus (Striated cone).